Consider the following 591-residue polypeptide: Acetyltransferase spyB (591 aa).

An N-linked (GlcNAc...) asparagine glycan is attached at Asn114. The next 9 membrane-spanning stretches (helical) occupy residues 123–143, 168–188, 199–219, 228–248, 309–329, 383–403, 453–473, 481–501, and 529–549; these read GTII…LIFL, TLLY…ILIL, LWIF…ISHG, VGVQ…INPL, SAFL…LNCA, ASIL…PLFG, IFFV…LMGI, ILFF…QAAW, and LVGF…WLCP.

This sequence belongs to the wax synthase family.

The protein resides in the membrane. The catalysed reaction is sartorypyrone F + acetyl-CoA = sartorypyrone G + CoA. The enzyme catalyses sartorypyrone D + acetyl-CoA = sartorypyrone A + CoA. Its pathway is secondary metabolite biosynthesis; terpenoid biosynthesis. In terms of biological role, acetyltransferase; part of the gene cluster that mediates the biosynthesis of meroterpenoids called sartorypyrones. SpyB catalyzes the last step of the pathway and is responsible for the acetylation of sartorypyrones D and F to produce sartorypyrones A and G, respectively. The biosynthesis of sartorypyrones begins with the production of triacetic acid lactone (TAL) by the NR-PKS spyA using one molecule of acetyl-CoA and two molecules of malonyl-CoA. The prenyltransferase spyF then conjugates geranylgeranyl pyrophosphate (GGPP) to TAL to form geranylgeranyl-triacetate lactone, for which the pathway-specific geranylgeranyl pyrophosphate synthase (GGPS) spyE is required to provide GGPP. Subsequently, geranylgeranyl-triacetate lactone is epoxidized at the terminal olein by the FAD-dependent monooxygenase spyC, followed by cyclization of the terpenoid component catalyzed by the terpene cyclase spyD to produce both the bicyclic sartorypyrone F and the monocyclic sartorypyrone D. Finally, the last step of the biosynthesis involves the acetylation of the meroterpenoids sartorypyrones D and F by the acetyltransferase SpyB to produce sartorypyrones A and G, respectively. This Aspergillus fumigatus (strain ATCC MYA-4609 / CBS 101355 / FGSC A1100 / Af293) (Neosartorya fumigata) protein is Acetyltransferase spyB.